The primary structure comprises 419 residues: MNLTELKQKPIAELLEMSDAMGLENMARSRKQDIIFALLKKHAKSGEEISGDGVLEILQDGFGFLRSADSSYLAGPDDIYVSPSQIRRFNLRTGDTIIGKIRPPKEGERYFALLKVDSINFDRPENAKNKILFENLTPLFPNERMKMEAGNGSTEDLTGRVIDLCAPIGKGQRGLIVAPPKAGKTIMLQNIASNITRNNPECHLIVLLIDERPEEVTEMQRTVRGEVVASTFDEPPTRHVQVAEMVIEKAKRLVEHKKDVVILLDSITRLARAYNTVIPSSGKVLTGGVDAHALEKPKRFFGAARNIEEGGSLTILATALVETGSKMDEVIYEEFKGTGNMELPLDRKIAEKRVFPAININRSGTRREELLTSEDELQRMWILRKILHPMDEISAIEFLIDKLKQTKTNDEFFDSMKRK.

In terms of domain architecture, Rho RNA-BD spans 48-123 (EISGDGVLEI…LKVDSINFDR (76 aa)). 3 RNA-binding regions span residues 61–66 (GFGFLR), 78–80 (DIY), and 108–110 (ERY). ATP is bound by residues 169 to 174 (GKGQRG), 181 to 186 (KAGKTI), and R212. Positions 284–288 (VLTGG) are RNA-binding 2.

It belongs to the Rho family. Homohexamer. The homohexamer assembles into an open ring structure.

In terms of biological role, facilitates transcription termination by a mechanism that involves Rho binding to the nascent RNA, activation of Rho's RNA-dependent ATPase activity, and release of the mRNA from the DNA template. The sequence is that of Transcription termination factor Rho from Pseudomonas aeruginosa (strain ATCC 15692 / DSM 22644 / CIP 104116 / JCM 14847 / LMG 12228 / 1C / PRS 101 / PAO1).